Reading from the N-terminus, the 23-residue chain is Paralytic peptide 1 (23 aa).

Residues Cys7 and Cys19 are joined by a disulfide bond.

It belongs to the GBP/PSP1/paralytic peptide family. Hemolymph.

Functionally, causes rapid, rigid paralysis when injected into Lepidopteran larvae. The physiological role may be to reduce hemolymph loss following injury and promote wound healing. The protein is Paralytic peptide 1 of Spodoptera exigua (Beet armyworm).